A 124-amino-acid chain; its full sequence is Small ribosomal subunit protein uS12 (124 aa).

Asp-89 bears the 3-methylthioaspartic acid mark. The interval 104–124 (TAGVKDRRQSRSKYGAKTPKE) is disordered.

Belongs to the universal ribosomal protein uS12 family. In terms of assembly, part of the 30S ribosomal subunit. Contacts proteins S8 and S17. May interact with IF1 in the 30S initiation complex.

Functionally, with S4 and S5 plays an important role in translational accuracy. Its function is as follows. Interacts with and stabilizes bases of the 16S rRNA that are involved in tRNA selection in the A site and with the mRNA backbone. Located at the interface of the 30S and 50S subunits, it traverses the body of the 30S subunit contacting proteins on the other side and probably holding the rRNA structure together. The combined cluster of proteins S8, S12 and S17 appears to hold together the shoulder and platform of the 30S subunit. In Parasynechococcus marenigrum (strain WH8102), this protein is Small ribosomal subunit protein uS12.